The sequence spans 160 residues: 2-amino-4-hydroxy-6-hydroxymethyldihydropteridine pyrophosphokinase (160 aa).

It belongs to the HPPK family. As to quaternary structure, monomer.

It carries out the reaction 6-hydroxymethyl-7,8-dihydropterin + ATP = (7,8-dihydropterin-6-yl)methyl diphosphate + AMP + H(+). It functions in the pathway cofactor biosynthesis; tetrahydrofolate biosynthesis; 2-amino-4-hydroxy-6-hydroxymethyl-7,8-dihydropteridine diphosphate from 7,8-dihydroneopterin triphosphate: step 4/4. In terms of biological role, catalyzes the transfer of pyrophosphate from adenosine triphosphate (ATP) to 6-hydroxymethyl-7,8-dihydropterin, an enzymatic step in folate biosynthesis pathway. The sequence is that of 2-amino-4-hydroxy-6-hydroxymethyldihydropteridine pyrophosphokinase (folK) from Haemophilus influenzae (strain ATCC 51907 / DSM 11121 / KW20 / Rd).